The primary structure comprises 483 residues: Phosphoenolpyruvate carboxylase (483 aa).

Residues 1 to 20 (MKVPRCMSTQHPDNVNPPFF) are disordered.

This sequence belongs to the PEPCase type 2 family. Homotetramer. Mg(2+) is required as a cofactor.

The enzyme catalyses oxaloacetate + phosphate = phosphoenolpyruvate + hydrogencarbonate. With respect to regulation, inhibited by NaCl, KCl, ATP, ADP, GTP and aspartate. Unlike E.coli, not regulated by acetyl-CoA. Catalyzes the irreversible beta-carboxylation of phosphoenolpyruvate (PEP) to form oxaloacetate (OAA), a four-carbon dicarboxylic acid source for the tricarboxylic acid cycle. The polypeptide is Phosphoenolpyruvate carboxylase (ppcA) (Methanothermobacter thermautotrophicus (strain ATCC 29096 / DSM 1053 / JCM 10044 / NBRC 100330 / Delta H) (Methanobacterium thermoautotrophicum)).